A 64-amino-acid polypeptide reads, in one-letter code: DNA-binding protein 7d (64 aa).

Residues Lys5, Lys7, Lys61, Lys63, and Lys64 each carry the N6-methyllysine modification.

Belongs to the 7 kDa DNA-binding/endoribonuclease P2 family. Monomer.

Its subcellular location is the cytoplasm. Functionally, can constrain negative DNA supercoils. May be involved in maintaining the integrity of the genome at high temperature. Stimulates the Holliday junction cleavage activity of Hjc. The chain is DNA-binding protein 7d (sso7d) from Saccharolobus solfataricus (strain ATCC 35092 / DSM 1617 / JCM 11322 / P2) (Sulfolobus solfataricus).